The following is a 309-amino-acid chain: MSKIVVALGGNALGQSPEEQLELVKGTAKSLVSLIQKGYEVVISHGNGPQVGSINLGLNYAAENGQGPAFPFPECGAMSQAYIGYQLQESLLNELHVLNIDKQVVTLVTQVEVAGDDQAFNNPTKPIGLFYTKEQAEQTMEEKGYKFVEDSGRGYRRVVPSPMPINIVELDSIETLIKHGTLVIAAGGGGIPVVKEEGNYKGVDAVIDKDKTSALLAAHLKSDQLIILTAVDYVYINYGKDNQEALGEVTVDEMNQHIADGQFAKGSMLPKVEAALQFIEKNPEGSVLITSLEDLGDALDGKIGTLIKK.

This sequence belongs to the carbamate kinase family.

It is found in the cytoplasm. It catalyses the reaction hydrogencarbonate + NH4(+) + ATP = carbamoyl phosphate + ADP + H2O + H(+). Its pathway is metabolic intermediate metabolism; carbamoyl phosphate degradation; CO(2) and NH(3) from carbamoyl phosphate: step 1/1. The polypeptide is Carbamate kinase (arcC) (Staphylococcus haemolyticus (strain JCSC1435)).